Consider the following 393-residue polypeptide: NAD(P)H-quinone oxidoreductase subunit H, chloroplastic (393 aa).

The protein belongs to the complex I 49 kDa subunit family. In terms of assembly, NDH is composed of at least 16 different subunits, 5 of which are encoded in the nucleus.

The protein localises to the plastid. It localises to the chloroplast thylakoid membrane. The catalysed reaction is a plastoquinone + NADH + (n+1) H(+)(in) = a plastoquinol + NAD(+) + n H(+)(out). It catalyses the reaction a plastoquinone + NADPH + (n+1) H(+)(in) = a plastoquinol + NADP(+) + n H(+)(out). NDH shuttles electrons from NAD(P)H:plastoquinone, via FMN and iron-sulfur (Fe-S) centers, to quinones in the photosynthetic chain and possibly in a chloroplast respiratory chain. The immediate electron acceptor for the enzyme in this species is believed to be plastoquinone. Couples the redox reaction to proton translocation, and thus conserves the redox energy in a proton gradient. The protein is NAD(P)H-quinone oxidoreductase subunit H, chloroplastic of Huperzia lucidula (Shining clubmoss).